The primary structure comprises 156 residues: 16 kDa phloem protein 1 (156 aa).

In terms of domain architecture, C2 spans 1–108; the sequence is MAVGILEVSL…LEMGVEKGTA (108 aa). Ca(2+) is bound by residues Asp-20, Asp-26, Asp-78, Asp-80, Ser-83, and Asp-86.

Ca(2+) serves as cofactor.

Its function is as follows. Binds to both sense and antisense RNA. Can also bind sheared DNA and dodecamer DNA with a low affinity. Interacts with mesophyll plasmodesmata to mediate its own cell-to-cell transport and potentiate RNA trafficking. May play a role in plant defense signaling. The chain is 16 kDa phloem protein 1 from Arabidopsis thaliana (Mouse-ear cress).